A 365-amino-acid polypeptide reads, in one-letter code: Histidinol-phosphate aminotransferase (365 aa).

Lys222 carries the N6-(pyridoxal phosphate)lysine modification.

This sequence belongs to the class-II pyridoxal-phosphate-dependent aminotransferase family. Histidinol-phosphate aminotransferase subfamily. As to quaternary structure, homodimer. The cofactor is pyridoxal 5'-phosphate.

It catalyses the reaction L-histidinol phosphate + 2-oxoglutarate = 3-(imidazol-4-yl)-2-oxopropyl phosphate + L-glutamate. It participates in amino-acid biosynthesis; L-histidine biosynthesis; L-histidine from 5-phospho-alpha-D-ribose 1-diphosphate: step 7/9. This Geobacillus sp. (strain WCH70) protein is Histidinol-phosphate aminotransferase.